The chain runs to 810 residues: Volume-regulated anion channel subunit LRRC8A (810 aa).

Residue M1 is modified to N-acetylmethionine. Over 1-22 (MIPVTELRYFADTQPAYRILKP) the chain is Cytoplasmic. Residues 23 to 47 (WWDVFTDYISIVMLMIAVFGGTLQV) form a helical membrane-spanning segment. The Extracellular segment spans residues 48–123 (TQDKMICLPC…YENRLHWFAK (76 aa)). 3 cysteine pairs are disulfide-bonded: C54–C310, C57–C65, and C113–C295. Residues N66 and N83 are each glycosylated (N-linked (GlcNAc...) asparagine). Residues 124 to 142 (YFPYLVLLHTLIFLACSNF) form a helical membrane-spanning segment. Residues 143-264 (WFKFPRTSSK…EEGDIVYRLY (122 aa)) lie on the Cytoplasmic side of the membrane. T200 bears the Phosphothreonine mark. The residue at position 202 (S202) is a Phosphoserine. T215 bears the Phosphothreonine mark. The residue at position 217 (S217) is a Phosphoserine. A helical membrane pass occupies residues 265–286 (MRQTIIKVIKFFLIICYTVYYV). The Extracellular segment spans residues 287–316 (HNIKFDVDCTVDIESLTGYRTYRCAHPLAT). Residues 317–341 (LFKILASFYISLVIFYGLICMYTLW) traverse the membrane as a helical segment. Topologically, residues 342-810 (WMLRRSLKKY…RLWRADKEQA (469 aa)) are cytoplasmic. LRR repeat units follow at residues 399–422 (ENKL…RLTK), 423–445 (NAQD…VFDL), 447–468 (ELEV…IAQL), 469–492 (TGLK…AFLR), 493–515 (ENLR…IYSL), 518–542 (LEEL…GLRE), 543–565 (LKRL…VTDV), 567–589 (VHLQ…SLKK), 590–613 (MVNL…IFSL), 614–637 (HNLQ…SFQH), 639–661 (HRLT…IGNL), 662–684 (TNLE…LFYC), 686–707 (KLRY…IGLL), 708–730 (QNLQ…LFQC), 732–753 (KLRA…VGEL), 754–776 (TNLT…LGEC), and 778–801 (LLKR…VKER). Positions 706 to 707 (LL) match the Di-leucine motif motif.

It belongs to the LRRC8 family. As to quaternary structure, heterohexamer; oligomerizes with other LRRC8 proteins (LRRC8B, LRRC8C, LRRC8D and/or LRRC8E) to form a heterohexamer. Can form homohexamers in vitro, but these have lower conductance than heterohexamers. Detected in a channel complex that contains LRRC8A, LRRC8C and LRRC8E. In vivo, the subunit composition may depend primarily on expression levels, and heterooligomeric channels containing various proportions of the different LRRC8 proteins may coexist. Interact with GRB2. Interacts with NOX4; this interaction prevents the ubiquitin-mediated degradation of LRRC8A. In terms of processing, N-glycosylated.

It is found in the cell membrane. Its subcellular location is the lysosome membrane. It catalyses the reaction chloride(in) = chloride(out). The catalysed reaction is iodide(out) = iodide(in). The enzyme catalyses taurine(out) = taurine(in). It carries out the reaction L-aspartate(out) = L-aspartate(in). It catalyses the reaction L-glutamate(out) = L-glutamate(in). The catalysed reaction is myo-inositol(out) = myo-inositol(in). The enzyme catalyses 2',3'-cGAMP(out) = 2',3'-cGAMP(in). With respect to regulation, inhibited by (4-[(2-butyl-6,7-dichloro-2-cyclopentyl-2,3-dihydro-1-oxo-1H-inden-5-yl)oxy]butanoic acid), which plugs the channel like a cork in a bottle by binding in the extracellular selectivity filter and sterically occluding ion conduction. Lipids may block conduction in closed heterohexameric channels. In terms of biological role, essential component of the volume-regulated anion channel (VRAC, also named VSOAC channel), an anion channel required to maintain a constant cell volume in response to extracellular or intracellular osmotic changes. The VRAC channel conducts iodide better than chloride and can also conduct organic osmolytes like taurine. Mediates efflux of amino acids, such as aspartate and glutamate, in response to osmotic stress. In complex with LRRC8C or LRRC8E, acts as a transporter of immunoreactive cyclic dinucleotide GMP-AMP (2'-3'-cGAMP), an immune messenger produced in response to DNA virus in the cytosol: mediates both import and export of 2'-3'-cGAMP, thereby promoting transfer of 2'-3'-cGAMP to bystander cells. In contrast, complexes containing LRRC8D inhibit transport of 2'-3'-cGAMP. Required for in vivo channel activity, together with at least one other family member (LRRC8B, LRRC8C, LRRC8D or LRRC8E); channel characteristics depend on the precise subunit composition. Can form functional channels by itself (in vitro). Involved in B-cell development: required for the pro-B cell to pre-B cell transition. Also required for T-cell development. Required for myoblast differentiation: VRAC activity promotes membrane hyperpolarization and regulates insulin-stimulated glucose metabolism and oxygen consumption. Also acts as a regulator of glucose-sensing in pancreatic beta cells: VRAC currents, generated in response to hypotonicity- or glucose-induced beta cell swelling, depolarize cells, thereby causing electrical excitation, leading to increase glucose sensitivity and insulin secretion. Also plays a role in lysosome homeostasis by forming functional lysosomal VRAC channels in response to low cytoplasmic ionic strength condition: lysosomal VRAC channels are necessary for the formation of large lysosome-derived vacuoles, which store and then expel excess water to maintain cytosolic water homeostasis. Acts as a key factor in NLRP3 inflammasome activation by modulating itaconate efflux and mitochondria function. In Rattus norvegicus (Rat), this protein is Volume-regulated anion channel subunit LRRC8A.